We begin with the raw amino-acid sequence, 450 residues long: Molybdate-anion transporter (450 aa).

The next 12 membrane-spanning stretches (helical) occupy residues 1–21 (MLVT…GLEL), 43–63 (LDFY…APYL), 79–99 (ILYV…SSLV), 128–148 (FVLL…FSAF), 176–196 (FWNH…ACWM), 198–218 (LGPV…GALA), 249–269 (VLLL…FVFL), 278–298 (GAPL…GSSL), 311–331 (PMHL…MLTF), 344–364 (FIAF…MSFL), 376–396 (GVLN…LLVL), and 409–429 (FSIC…LFTV).

It belongs to the major facilitator superfamily.

It is found in the cell membrane. Its function is as follows. Mediates high-affinity intracellular uptake of the rare oligo-element molybdenum. The polypeptide is Molybdate-anion transporter (MFSD5) (Bos taurus (Bovine)).